A 414-amino-acid polypeptide reads, in one-letter code: Imidazolonepropionase (414 aa).

Residues Met-1 to Pro-20 show a composition bias toward polar residues. Residues Met-1–Gln-26 are disordered. Fe(3+) is bound by residues His-81 and His-83. Positions 81 and 83 each coordinate Zn(2+). 4-imidazolone-5-propanoate contacts are provided by Arg-90, Tyr-153, and His-186. Residue Tyr-153 participates in N-formimidoyl-L-glutamate binding. His-251 serves as a coordination point for Fe(3+). His-251 is a binding site for Zn(2+). Glu-254 lines the 4-imidazolone-5-propanoate pocket. Position 325 (Asp-325) interacts with Fe(3+). Asp-325 serves as a coordination point for Zn(2+). Asn-327 and Gly-329 together coordinate N-formimidoyl-L-glutamate. Residue Ser-330 coordinates 4-imidazolone-5-propanoate.

It belongs to the metallo-dependent hydrolases superfamily. HutI family. The cofactor is Zn(2+). Requires Fe(3+) as cofactor.

The protein localises to the cytoplasm. The enzyme catalyses 4-imidazolone-5-propanoate + H2O = N-formimidoyl-L-glutamate. It functions in the pathway amino-acid degradation; L-histidine degradation into L-glutamate; N-formimidoyl-L-glutamate from L-histidine: step 3/3. Its function is as follows. Catalyzes the hydrolytic cleavage of the carbon-nitrogen bond in imidazolone-5-propanoate to yield N-formimidoyl-L-glutamate. It is the third step in the universal histidine degradation pathway. This chain is Imidazolonepropionase, found in Desulfotalea psychrophila (strain LSv54 / DSM 12343).